We begin with the raw amino-acid sequence, 728 residues long: 1,4-alpha-glucan branching enzyme GlgB (728 aa).

Catalysis depends on aspartate 409, which acts as the Nucleophile. Glutamate 462 functions as the Proton donor in the catalytic mechanism.

It belongs to the glycosyl hydrolase 13 family. GlgB subfamily. In terms of assembly, monomer.

It carries out the reaction Transfers a segment of a (1-&gt;4)-alpha-D-glucan chain to a primary hydroxy group in a similar glucan chain.. Its pathway is glycan biosynthesis; glycogen biosynthesis. In terms of biological role, catalyzes the formation of the alpha-1,6-glucosidic linkages in glycogen by scission of a 1,4-alpha-linked oligosaccharide from growing alpha-1,4-glucan chains and the subsequent attachment of the oligosaccharide to the alpha-1,6 position. This is 1,4-alpha-glucan branching enzyme GlgB from Cereibacter sphaeroides (strain ATCC 17023 / DSM 158 / JCM 6121 / CCUG 31486 / LMG 2827 / NBRC 12203 / NCIMB 8253 / ATH 2.4.1.) (Rhodobacter sphaeroides).